The following is a 675-amino-acid chain: tRNA 5-methylaminomethyl-2-thiouridine biosynthesis bifunctional protein MnmC (675 aa).

The tRNA (mnm(5)s(2)U34)-methyltransferase stretch occupies residues 1 to 245 (MANLPIQHAS…KREMLSGLLP (245 aa)). The segment at 271–675 (IGGGIASVLT…LLKGKPVTHD (405 aa)) is FAD-dependent cmnm(5)s(2)U34 oxidoreductase.

In the N-terminal section; belongs to the methyltransferase superfamily. tRNA (mnm(5)s(2)U34)-methyltransferase family. This sequence in the C-terminal section; belongs to the DAO family. Requires FAD as cofactor.

The protein localises to the cytoplasm. It carries out the reaction 5-aminomethyl-2-thiouridine(34) in tRNA + S-adenosyl-L-methionine = 5-methylaminomethyl-2-thiouridine(34) in tRNA + S-adenosyl-L-homocysteine + H(+). In terms of biological role, catalyzes the last two steps in the biosynthesis of 5-methylaminomethyl-2-thiouridine (mnm(5)s(2)U) at the wobble position (U34) in tRNA. Catalyzes the FAD-dependent demodification of cmnm(5)s(2)U34 to nm(5)s(2)U34, followed by the transfer of a methyl group from S-adenosyl-L-methionine to nm(5)s(2)U34, to form mnm(5)s(2)U34. The chain is tRNA 5-methylaminomethyl-2-thiouridine biosynthesis bifunctional protein MnmC from Pectobacterium atrosepticum (strain SCRI 1043 / ATCC BAA-672) (Erwinia carotovora subsp. atroseptica).